Reading from the N-terminus, the 364-residue chain is MAAAFTSSPVVSQPQFTAMNEQQCFSNESIAFFYNRSGKYLATEWNTVTKLVMGLGITVCIFIMLANLLVMVAIYVNRRFHFPIYYLMANLAAADFFAGLAYFYLMFNTGPNTRRLTVSTWLLRQGLIDTSLTVSVANLLAIAIERHITVFRMQLHARMSNRRVVVVIVVIWTMAIVMGAIPSVGWNCICDIENCSNMAPLYSDSYLVFWAIFNLVTFVVMVVLYAHIFGYVRQRTMRMSRHSSGPRRNRDTMMSLLKTVVIVLGAFIICWTPGLVLLLLDVCCPQCDVLAYEKFFLLLAEFNSAMNPIIYSYRDKEMSATFRQILCCQRSENTSGPTEGSDRSASSLNHTILAGVHSNDHSVV.

The Extracellular portion of the chain corresponds to 1-50 (MAAAFTSSPVVSQPQFTAMNEQQCFSNESIAFFYNRSGKYLATEWNTVTK). 2 disulfide bridges follow: Cys-24/Cys-190 and Cys-188/Cys-195. N-linked (GlcNAc...) asparagine glycans are attached at residues Asn-27 and Asn-35. Lys-39 serves as a coordination point for a 1-acyl-sn-glycero-3-phosphate. Residues 51–75 (LVMGLGITVCIFIMLANLLVMVAIY) form a helical membrane-spanning segment. Over 76–83 (VNRRFHFP) the chain is Cytoplasmic. A helical membrane pass occupies residues 84-107 (IYYLMANLAAADFFAGLAYFYLMF). The Extracellular segment spans residues 108–121 (NTGPNTRRLTVSTW). Residues 122–144 (LLRQGLIDTSLTVSVANLLAIAI) traverse the membrane as a helical segment. 124–129 (RQGLID) contributes to the a 1-acyl-sn-glycero-3-phosphate binding site. The Cytoplasmic segment spans residues 145-163 (ERHITVFRMQLHARMSNRR). The helical transmembrane segment at 164-184 (VVVVIVVIWTMAIVMGAIPSV) threads the bilayer. Over 185–204 (GWNCICDIENCSNMAPLYSD) the chain is Extracellular. A helical membrane pass occupies residues 205 to 225 (SYLVFWAIFNLVTFVVMVVLY). Position 210 (Trp-210) interacts with a 1-acyl-sn-glycero-3-phosphate. The Cytoplasmic segment spans residues 226 to 255 (AHIFGYVRQRTMRMSRHSSGPRRNRDTMMS). A helical membrane pass occupies residues 256–280 (LLKTVVIVLGAFIICWTPGLVLLLL). The Extracellular portion of the chain corresponds to 281–294 (DVCCPQCDVLAYEK). A disulfide bridge connects residues Cys-284 and Cys-287. Residues 295–315 (FFLLLAEFNSAMNPIIYSYRD) traverse the membrane as a helical segment. Residues 316–364 (KEMSATFRQILCCQRSENTSGPTEGSDRSASSLNHTILAGVHSNDHSVV) are Cytoplasmic-facing. Ser-341 carries the post-translational modification Phosphoserine. Thr-351 is subject to Phosphothreonine.

The protein belongs to the G-protein coupled receptor 1 family. In terms of assembly, interacts with RALA and GRK2. Interacts with GNAQ and GNA13. Interacts with CD14; the interaction is enhanced by exposure to bacterial lipopolysaccharide (LPS). N-glycosylated.

It is found in the cell surface. The protein localises to the cell membrane. The protein resides in the endosome. Its function is as follows. Receptor for lysophosphatidic acid (LPA). Plays a role in the reorganization of the actin cytoskeleton, cell migration, differentiation and proliferation, and thereby contributes to the responses to tissue damage and infectious agents. Activates downstream signaling cascades via the G(i)/G(o), G(12)/G(13), and G(q) families of heteromeric G proteins. Signaling inhibits adenylyl cyclase activity and decreases cellular cAMP levels. Signaling triggers an increase of cytoplasmic Ca(2+) levels. Activates RALA; this leads to the activation of phospholipase C (PLC) and the formation of inositol 1,4,5-trisphosphate. Signaling mediates activation of down-stream MAP kinases. Contributes to the regulation of cell shape. Promotes Rho-dependent reorganization of the actin cytoskeleton in neuronal cells and neurite retraction. Promotes the activation of Rho and the formation of actin stress fibers. Promotes formation of lamellipodia at the leading edge of migrating cells via activation of RAC1. Through its function as LPA receptor, plays a role in chemotaxis and cell migration, including responses to injury and wounding. Plays a role in triggering inflammation in response to bacterial lipopolysaccharide (LPS) via its interaction with CD14. Promotes cell proliferation in response to LPA. Inhibits the intracellular ciliogenesis pathway in response to LPA and through AKT1 activation. Required for normal skeleton development. May play a role in osteoblast differentiation. Required for normal brain development. Required for normal proliferation, survival and maturation of newly formed neurons in the adult dentate gyrus. Plays a role in pain perception and in the initiation of neuropathic pain. The sequence is that of Lysophosphatidic acid receptor 1 (LPAR1) from Bos taurus (Bovine).